The following is a 330-amino-acid chain: Ketol-acid reductoisomerase (NADP(+)) (330 aa).

The KARI N-terminal Rossmann domain maps to 1 to 181; sequence MNAYYEQDAD…GGTKAGVIET (181 aa). NADP(+) is bound by residues 24 to 27, Arg-47, Ser-50, Ser-52, and 82 to 85; these read YGSQ and DQYQ. The active site involves His-107. Position 133 (Gly-133) interacts with NADP(+). Positions 182-327 constitute a KARI C-terminal knotted domain; the sequence is TFKNETETDL…SKLRDMMSWL (146 aa). Residues Asp-190, Glu-194, Glu-226, and Glu-230 each coordinate Mg(2+). Residue Ser-251 participates in substrate binding.

Belongs to the ketol-acid reductoisomerase family. The cofactor is Mg(2+).

It carries out the reaction (2R)-2,3-dihydroxy-3-methylbutanoate + NADP(+) = (2S)-2-acetolactate + NADPH + H(+). It catalyses the reaction (2R,3R)-2,3-dihydroxy-3-methylpentanoate + NADP(+) = (S)-2-ethyl-2-hydroxy-3-oxobutanoate + NADPH + H(+). The protein operates within amino-acid biosynthesis; L-isoleucine biosynthesis; L-isoleucine from 2-oxobutanoate: step 2/4. Its pathway is amino-acid biosynthesis; L-valine biosynthesis; L-valine from pyruvate: step 2/4. Functionally, involved in the biosynthesis of branched-chain amino acids (BCAA). Catalyzes an alkyl-migration followed by a ketol-acid reduction of (S)-2-acetolactate (S2AL) to yield (R)-2,3-dihydroxy-isovalerate. In the isomerase reaction, S2AL is rearranged via a Mg-dependent methyl migration to produce 3-hydroxy-3-methyl-2-ketobutyrate (HMKB). In the reductase reaction, this 2-ketoacid undergoes a metal-dependent reduction by NADPH to yield (R)-2,3-dihydroxy-isovalerate. The sequence is that of Ketol-acid reductoisomerase (NADP(+)) from Chlorobium limicola (strain DSM 245 / NBRC 103803 / 6330).